We begin with the raw amino-acid sequence, 788 residues long: MLLLLLLLLLLPPLVLRVAASRCLHDETQKSVSLLRPPFSQLPSKSRSSSLTLPSSRDPQPLRIQSCYLGDHISDGAWDPEGEGMRGGSRALAAVREATQRIQAVLAVQGPLLLSRDPAQYCHAVWGDPDSPNYHRCSLLNPGYKGESCLGAKIPDTHLRGYALWPEQGPPQLVQPDGPGVQNTDFLLYVRVAHTSKCHQETVSLCCPGWSTAAQSQLTAALTSWAQRRGFVMLPRLCLKLLGSSNLPTLASQSIRITGPSVIAYAACCQLDSEDRPLAGTIVYCAQHLTSPSLSHSDIVMATLHELLHALGFSGQLFKKWRDCPSGFSVRENCSTRQLVTRQDEWGQLLLTTPAVSLSLAKHLGVSGASLGVPLEEEEGLLSSHWEARLLQGSLMTATFDGAQRTRLDPITLAAFKDSGWYQVNHSAAEELLWGQGSGPEFGLVTTCGTGSSDFFCTGSGLGCHYLHLDKGSCSSDPMLEGCRMYKPLANGSECWKKENGFPAGVDNPHGEIYHPQSRCFFANLTSQLLPGDKPRHPSLTPHLKEAELMGRCYLHQCTGRGAYKVQVEGSPWVPCLPGKVIQIPGYYGLLFCPRGRLCQTNEDINAVTSPPVSLSTPDPLFQLSLELAGPPGHSLGKEQQEGLAEAVLEALASKGGTGRCYFHGPSITTSLVFTVHMWKSPGCQGPSVATLHKALTLTLQKKPLEVYHGGANFTTQPSKLLVTSDHNPSMTHLRLSMGLCLMLLILVGVMGTTAYQKRATLPVRPSASYHSPELHSTRVPVRGIREV.

The signal sequence occupies residues 1 to 20 (MLLLLLLLLLLPPLVLRVAA). The Extracellular portion of the chain corresponds to 21–735 (SRCLHDETQK…DHNPSMTHLR (715 aa)). The segment covering 40 to 56 (SQLPSKSRSSSLTLPSS) has biased composition (low complexity). The segment at 40–59 (SQLPSKSRSSSLTLPSSRDP) is disordered. Residue histidine 305 participates in Zn(2+) binding. Residue glutamate 306 is part of the active site. Histidine 309 provides a ligand contact to Zn(2+). N-linked (GlcNAc...) asparagine glycosylation occurs at asparagine 333. Histidine 385 serves as a coordination point for Zn(2+). Asparagine 425, asparagine 491, asparagine 524, and asparagine 713 each carry an N-linked (GlcNAc...) asparagine glycan. The helical transmembrane segment at 736–756 (LSMGLCLMLLILVGVMGTTAY) threads the bilayer. Over 757 to 788 (QKRATLPVRPSASYHSPELHSTRVPVRGIREV) the chain is Cytoplasmic. The interval 767-788 (SASYHSPELHSTRVPVRGIREV) is disordered.

Belongs to the peptidase M8 family. Zn(2+) is required as a cofactor.

It localises to the membrane. Its function is as follows. Putative metalloproteinase that plays a role in left-right patterning process. The chain is Ciliated left-right organizer metallopeptidase from Homo sapiens (Human).